Consider the following 338-residue polypeptide: Probable tRNA pseudouridine synthase B (338 aa).

Asp-82 (nucleophile) is an active-site residue. Residues 250–325 (LPKVWIRDSA…IAVDVDKVFM (76 aa)) form the PUA domain.

The protein belongs to the pseudouridine synthase TruB family. Type 2 subfamily.

The enzyme catalyses uridine(55) in tRNA = pseudouridine(55) in tRNA. Could be responsible for synthesis of pseudouridine from uracil-55 in the psi GC loop of transfer RNAs. The sequence is that of Probable tRNA pseudouridine synthase B from Thermococcus kodakarensis (strain ATCC BAA-918 / JCM 12380 / KOD1) (Pyrococcus kodakaraensis (strain KOD1)).